An 85-amino-acid chain; its full sequence is UPF0386 protein Atu1321 (85 aa).

This sequence belongs to the UPF0386 family.

The protein is UPF0386 protein Atu1321 of Agrobacterium fabrum (strain C58 / ATCC 33970) (Agrobacterium tumefaciens (strain C58)).